Here is a 320-residue protein sequence, read N- to C-terminus: Heterogeneous nuclear ribonucleoprotein A1-like 2 (320 aa).

The segment at 4–94 (SASPKEPEQL…EPKRAVSRED (91 aa)) is globular A domain. Ser6 and Ser22 each carry phosphoserine. 2 RRM domains span residues 14–97 (RKLF…DSQR) and 105–184 (KKIF…LPKQ). The segment at 95–185 (SQRPGAHLTV…EVRKALPKQE (91 aa)) is globular B domain. The tract at residues 181–216 (LPKQEMASASSSQRGRRGSGNFGGGRGDGFGGNDNF) is disordered. Asymmetric dimethylarginine; alternate occurs at positions 194, 206, 218, and 225. Arg194, Arg206, Arg218, and Arg225 each carry omega-N-methylarginine; alternate. A compositionally biased stretch (gly residues) spans 198–216 (GSGNFGGGRGDGFGGNDNF). Residues 218-240 (RGGNFSGRGGFGGSCGGGGYGGS) are RNA-binding RGG-box. The nuclear targeting sequence stretch occupies residues 268 to 305 (NQSSNFGPMKGGNFGGRSSGPYGGGGQYFAKPQNQGGY). Residues 271–320 (SNFGPMKGGNFGGRSSGPYGGGGQYFAKPQNQGGYGVSSSSSSYGSGRRF) are disordered. The span at 276-294 (MKGGNFGGRSSGPYGGGGQ) shows a compositional bias: gly residues. Arg284 carries the post-translational modification Omega-N-methylarginine. N6-acetyllysine is present on Lys298. Low complexity predominate over residues 307–320 (VSSSSSSYGSGRRF).

It is found in the nucleus. It localises to the cytoplasm. Involved in the packaging of pre-mRNA into hnRNP particles, transport of poly(A) mRNA from the nucleus to the cytoplasm and may modulate splice site selection. The sequence is that of Heterogeneous nuclear ribonucleoprotein A1-like 2 (HNRNPA1L2) from Homo sapiens (Human).